A 384-amino-acid polypeptide reads, in one-letter code: Probable inactive patatin-like protein 9 (384 aa).

The region spanning 33-234 is the PNPLA domain; sequence LSIDGGGTTG…VMNNPTAAAV (202 aa). A GXGXXG motif is present at residues 37–42; that stretch reads GGGTTG. The active-site Proton acceptor is the Asp-221. The DGA/G signature appears at 221-223; the sequence is DGG. A disordered region spans residues 363-384; sequence GKSSLPPSPCKESAVNPLADGR.

It belongs to the patatin family. In terms of tissue distribution, highly expressed in roots and at lower levels in flowers and siliques.

This is Probable inactive patatin-like protein 9 (PLP9) from Arabidopsis thaliana (Mouse-ear cress).